Reading from the N-terminus, the 132-residue chain is Small ribosomal subunit protein uS8 (132 aa).

The protein belongs to the universal ribosomal protein uS8 family. Part of the 30S ribosomal subunit. Contacts proteins S5 and S12.

In terms of biological role, one of the primary rRNA binding proteins, it binds directly to 16S rRNA central domain where it helps coordinate assembly of the platform of the 30S subunit. The sequence is that of Small ribosomal subunit protein uS8 from Streptomyces coelicolor (strain ATCC BAA-471 / A3(2) / M145).